An 802-amino-acid chain; its full sequence is Osmosensitive cation channel TMEM63C (802 aa).

The Extracellular portion of the chain corresponds to 1 to 35; the sequence is MTASPESMGQKFRNMTANECFQSRSTVLQGQPFGG. The chain crosses the membrane as a helical span at residues 36–60; that stretch reads IPTVLLLNIILWVCVVLVYSFLRKA. Over 61 to 124 the chain is Cytoplasmic; the sequence is AWDYGRLALL…RDRDLINKCG (64 aa). Phosphoserine occurs at positions 75 and 78. The chain crosses the membrane as a helical span at residues 125–157; that stretch reads EDARIYIMFQYHLIIFVLILCIPSLGIILPVNY. The Extracellular segment spans residues 158 to 180; the sequence is IGSALDWSSHFGRTTIVNVSTES. A helical membrane pass occupies residues 181–205; sequence QFLWLHSIFAFMYFLTNFAFMGHHC. Residues 206-401 lie on the Cytoplasmic side of the membrane; the sequence is LGFVPKKNLH…IIWKHLSIRR (196 aa). The helical transmembrane segment at 402–431 threads the bilayer; the sequence is FSWWARFIAINTSLFFLFFFLTTPAIIINT. At 432–446 the chain is on the extracellular side; that stretch reads IDMYNVTRPIEKLQS. A helical membrane pass occupies residues 447–476; that stretch reads PVVTQFFPSVLLWAFTVIMPLLVYFSAFLE. At 477–480 the chain is on the cytoplasmic side; sequence AHWT. The helical transmembrane segment at 481–517 threads the bilayer; that stretch reads RSNQNLIIMYKCYIFLVFMVVILPSMGLTSLDVFLRW. The Extracellular segment spans residues 518 to 540; sequence LFDIYYLEHATIRFQCVFLPDNG. The chain crosses the membrane as a helical span at residues 541-573; it reads AFFINYVITSALFGTGMELMRLGSLCTYCTRLF. At 574–593 the chain is on the cytoplasmic side; that stretch reads LSRSEPERVHIRKNLAMDFQ. The helical transmembrane segment at 594–612 threads the bilayer; it reads FGREYAWMLNVFSVVMAYS. At 613–615 the chain is on the extracellular side; it reads ITC. Residues 616–640 form a helical membrane-spanning segment; the sequence is PIIVPFGLLYLCMKHITDRYNMYYS. Residues 641–647 lie on the Cytoplasmic side of the membrane; that stretch reads YAPTKLN. The chain crosses the membrane as a helical span at residues 648-676; that stretch reads AQIHMAAVYQAIFAPLLGLFWMLFFSILR. Over 677-681 the chain is Extracellular; it reads VGSLH. The chain crosses the membrane as a helical span at residues 682–702; sequence SITLFSLSSIIISVIIAFSGV. The Cytoplasmic segment spans residues 703–802; that stretch reads FLGKFRIAQQ…EGLELEGQSH (100 aa). The interval 753–785 is disordered; that stretch reads TPASSPARHTYGTMNSQPEEGEEESGLRGFARE.

This sequence belongs to the CSC1 (TC 1.A.17) family. As to quaternary structure, monomer. As to expression, expressed in podocytes of kidney glomeruli.

The protein localises to the endoplasmic reticulum membrane. Its subcellular location is the cell membrane. It carries out the reaction Ca(2+)(in) = Ca(2+)(out). In terms of biological role, acts as an osmosensitive cation channel preferentially activated upon hypotonic stress. In contrast to TMEM63B, does not show phospholipid scramblase activity. Enriched in mitochondria-ER contact sites where it may regulate the metabolite flux and organelles' morphologies in response to osmotic changes. In particular may regulate mitochondrial motility and function in motor neuron axons. Required for the functional integrity of the kidney glomerular filtration barrier. This is Osmosensitive cation channel TMEM63C (Tmem63c) from Rattus norvegicus (Rat).